A 353-amino-acid chain; its full sequence is uncharacterized protein (353 aa).

This sequence belongs to the MG067/MG068/MG395 family.

This is an uncharacterized protein from Mycoplasma pneumoniae (strain ATCC 29342 / M129 / Subtype 1) (Mycoplasmoides pneumoniae).